The following is a 389-amino-acid chain: NADH-quinone oxidoreductase subunit D (389 aa).

Belongs to the complex I 49 kDa subunit family. In terms of assembly, NDH-1 is composed of 14 different subunits. Subunits NuoB, C, D, E, F, and G constitute the peripheral sector of the complex.

Its subcellular location is the cell inner membrane. It carries out the reaction a quinone + NADH + 5 H(+)(in) = a quinol + NAD(+) + 4 H(+)(out). Functionally, NDH-1 shuttles electrons from NADH, via FMN and iron-sulfur (Fe-S) centers, to quinones in the respiratory chain. The immediate electron acceptor for the enzyme in this species is believed to be ubiquinone. Couples the redox reaction to proton translocation (for every two electrons transferred, four hydrogen ions are translocated across the cytoplasmic membrane), and thus conserves the redox energy in a proton gradient. In Citrifermentans bemidjiense (strain ATCC BAA-1014 / DSM 16622 / JCM 12645 / Bem) (Geobacter bemidjiensis), this protein is NADH-quinone oxidoreductase subunit D.